We begin with the raw amino-acid sequence, 335 residues long: Lipoyl synthase (335 aa).

Residues C55, C60, C66, C81, C85, C88, and S292 each coordinate [4Fe-4S] cluster. Positions 67-281 constitute a Radical SAM core domain; that stretch reads WEDREATFLI…SQRAEEIGFQ (215 aa).

This sequence belongs to the radical SAM superfamily. Lipoyl synthase family. [4Fe-4S] cluster is required as a cofactor.

The protein localises to the cytoplasm. It catalyses the reaction [[Fe-S] cluster scaffold protein carrying a second [4Fe-4S](2+) cluster] + N(6)-octanoyl-L-lysyl-[protein] + 2 oxidized [2Fe-2S]-[ferredoxin] + 2 S-adenosyl-L-methionine + 4 H(+) = [[Fe-S] cluster scaffold protein] + N(6)-[(R)-dihydrolipoyl]-L-lysyl-[protein] + 4 Fe(3+) + 2 hydrogen sulfide + 2 5'-deoxyadenosine + 2 L-methionine + 2 reduced [2Fe-2S]-[ferredoxin]. It participates in protein modification; protein lipoylation via endogenous pathway; protein N(6)-(lipoyl)lysine from octanoyl-[acyl-carrier-protein]: step 2/2. In terms of biological role, catalyzes the radical-mediated insertion of two sulfur atoms into the C-6 and C-8 positions of the octanoyl moiety bound to the lipoyl domains of lipoate-dependent enzymes, thereby converting the octanoylated domains into lipoylated derivatives. This Micrococcus luteus (strain ATCC 4698 / DSM 20030 / JCM 1464 / CCM 169 / CCUG 5858 / IAM 1056 / NBRC 3333 / NCIMB 9278 / NCTC 2665 / VKM Ac-2230) (Micrococcus lysodeikticus) protein is Lipoyl synthase.